A 141-amino-acid polypeptide reads, in one-letter code: HTH-type transcriptional regulator MntR (141 aa).

The 63-residue stretch at 1–63 (MPTPSMEDYI…YEKYRGLVLT (63 aa)) folds into the HTH dtxR-type domain. Mn(2+) is bound by residues D8, E11, H77, E99, E102, and H103.

This sequence belongs to the DtxR/MntR family. As to quaternary structure, homodimer.

The protein localises to the cytoplasm. DNA binding is strongly activated by Mn(2+). Central regulator of manganese homeostasis. The sequence is that of HTH-type transcriptional regulator MntR from Geobacillus thermodenitrificans (strain NG80-2).